The sequence spans 592 residues: Nucleolar protein 58 (592 aa).

Residues 285–410 enclose the Nop domain; that stretch reads IAPNLTALVG…LERKLAAMEG (126 aa). The tract at residues 443-592 is disordered; it reads DADALSSDEP…QKKKKKKGEE (150 aa). A compositionally biased stretch (basic and acidic residues) spans 450–462; that stretch reads DEPKSKKDKKLIE. The segment covering 463 to 478 has biased composition (acidic residues); the sequence is EVSDEEMADADSDEEP. 2 stretches are compositionally biased toward basic and acidic residues: residues 505-515 and 557-571; these read GKDAELEKLAE and KKASKGDEKKRKRSD. Basic residues predominate over residues 582-592; sequence KQKKKKKKGEE.

The protein belongs to the NOP5/NOP56 family.

It is found in the nucleus. The protein localises to the nucleolus. In terms of biological role, required for pre-18S rRNA processing. May bind microtubules. The protein is Nucleolar protein 58 (nop58) of Aspergillus clavatus (strain ATCC 1007 / CBS 513.65 / DSM 816 / NCTC 3887 / NRRL 1 / QM 1276 / 107).